Reading from the N-terminus, the 159-residue chain is Phosphopantetheine adenylyltransferase (159 aa).

Serine 9 contacts substrate. Residues 9–10 (SF) and histidine 17 contribute to the ATP site. 3 residues coordinate substrate: lysine 41, isoleucine 75, and lysine 89. Residues 90-92 (GLR), glutamate 100, and 124-130 (LEHISSS) contribute to the ATP site.

Belongs to the bacterial CoaD family. Homohexamer. Mg(2+) is required as a cofactor.

The protein localises to the cytoplasm. It carries out the reaction (R)-4'-phosphopantetheine + ATP + H(+) = 3'-dephospho-CoA + diphosphate. Its pathway is cofactor biosynthesis; coenzyme A biosynthesis; CoA from (R)-pantothenate: step 4/5. In terms of biological role, reversibly transfers an adenylyl group from ATP to 4'-phosphopantetheine, yielding dephospho-CoA (dPCoA) and pyrophosphate. The protein is Phosphopantetheine adenylyltransferase of Bifidobacterium animalis subsp. lactis (strain AD011).